A 138-amino-acid polypeptide reads, in one-letter code: Translation initiation factor 2 subunit beta (138 aa).

The protein belongs to the eIF-2-beta/eIF-5 family. Heterotrimer composed of an alpha, a beta and a gamma chain.

EIF-2 functions in the early steps of protein synthesis by forming a ternary complex with GTP and initiator tRNA. This Methanococcus maripaludis (strain DSM 14266 / JCM 13030 / NBRC 101832 / S2 / LL) protein is Translation initiation factor 2 subunit beta.